A 211-amino-acid polypeptide reads, in one-letter code: Arginine exporter protein ArgO (211 aa).

6 helical membrane-spanning segments follow: residues 1–21 (MFTY…PLGP), 37–57 (LMIA…GIFG), 68–88 (LLAL…FGAL), 111–131 (IIIT…DTFV), 147–167 (WFAL…ALLA), and 179–199 (AQRI…FQLA).

This sequence belongs to the LysE/ArgO transporter (TC 2.A.75) family.

Its subcellular location is the cell inner membrane. It carries out the reaction L-arginine(in) = L-arginine(out). In terms of biological role, involved in the export of arginine. Important to control the intracellular level of arginine and the correct balance between arginine and lysine. The protein is Arginine exporter protein ArgO of Klebsiella pneumoniae subsp. pneumoniae (strain ATCC 700721 / MGH 78578).